Reading from the N-terminus, the 305-residue chain is Methionyl-tRNA formyltransferase (305 aa).

108 to 111 (SLLP) is a (6S)-5,6,7,8-tetrahydrofolate binding site.

This sequence belongs to the Fmt family.

It catalyses the reaction L-methionyl-tRNA(fMet) + (6R)-10-formyltetrahydrofolate = N-formyl-L-methionyl-tRNA(fMet) + (6S)-5,6,7,8-tetrahydrofolate + H(+). In terms of biological role, attaches a formyl group to the free amino group of methionyl-tRNA(fMet). The formyl group appears to play a dual role in the initiator identity of N-formylmethionyl-tRNA by promoting its recognition by IF2 and preventing the misappropriation of this tRNA by the elongation apparatus. This chain is Methionyl-tRNA formyltransferase, found in Clavibacter michiganensis subsp. michiganensis (strain NCPPB 382).